A 553-amino-acid polypeptide reads, in one-letter code: MIKINKILSLLIILLIINCNYQFVKADAESKALDIINRYRDIARYTFFTTDGHLEKYPSGFCGGTTIEDCKWDEYIEAVILLSGITFIIAAITLIFGIIFWIFRCLCFGGCKPTHGILCPGPKYDPDIGEGYSKGRVFILKLVTLIMVAGCVAVFITSLKGNSSVTSGINNLSDTVFNKTSYTLEQLIEISNQLNETKYQQFDQKQEIQSQLTQLISDGEELESKGEDISSNAKDINNIRTKIIIVGLVFCMVVAGLIGVSALIGLPRISRAASIALVILIPFMWIVFSVHYPINSVVADICISYDTTGVQQLSNFTNPIIEQVFEGCQNDNNTISVFEDLQSLVNNLLQNATDTSCDKINDACQLAFPRYPNDNPLSVPYQQNVLDCPPTLTCSNTTLSIYLFNTTVHDFNVKCKNAPTCGDLSTCDPSILTEVMSCDWVDVSSVNSCSQGGCQYNQQVVNTTKQIMQLYDILTSLTTLWTDKVVPLIKCSYLMPFIDEVQNIVCVDEVNSLDLLIAPTAVFAILLTGLGITGILGSKRFNSKYRVKGSRSA.

The signal sequence occupies residues 1 to 26 (MIKINKILSLLIILLIINCNYQFVKA). 2 consecutive transmembrane segments (helical) span residues 80-100 (ILLS…GIIF) and 137-157 (VFIL…VFIT). Asn162, Asn171, Asn178, and Asn195 each carry an N-linked (GlcNAc...) asparagine glycan. Helical transmembrane passes span 243-263 (IIIV…VSAL) and 274-294 (SIAL…HYPI). Asn315, Asn332, Asn351, Asn396, Asn405, and Asn462 each carry an N-linked (GlcNAc...) asparagine glycan. Residues 515–535 (LLIAPTAVFAILLTGLGITGI) form a helical membrane-spanning segment.

Its subcellular location is the membrane. The polypeptide is Transmembrane protein DDB_G0292058 (Dictyostelium discoideum (Social amoeba)).